Reading from the N-terminus, the 754-residue chain is 5-methyltetrahydropteroyltriglutamate--homocysteine methyltransferase (754 aa).

5-methyltetrahydropteroyltri-L-glutamate-binding positions include 17-20 (RELK) and K117. L-homocysteine is bound by residues 431 to 433 (IGS) and E484. Residues 431–433 (IGS) and E484 contribute to the L-methionine site. 5-methyltetrahydropteroyltri-L-glutamate is bound by residues 515–516 (RC) and W561. D599 serves as a coordination point for L-homocysteine. An L-methionine-binding site is contributed by D599. Residue E605 coordinates 5-methyltetrahydropteroyltri-L-glutamate. Zn(2+)-binding residues include H641, C643, and E665. H694 serves as the catalytic Proton donor. C726 is a Zn(2+) binding site.

The protein belongs to the vitamin-B12 independent methionine synthase family. The cofactor is Zn(2+).

It catalyses the reaction 5-methyltetrahydropteroyltri-L-glutamate + L-homocysteine = tetrahydropteroyltri-L-glutamate + L-methionine. The protein operates within amino-acid biosynthesis; L-methionine biosynthesis via de novo pathway; L-methionine from L-homocysteine (MetE route): step 1/1. Functionally, catalyzes the transfer of a methyl group from 5-methyltetrahydrofolate to homocysteine resulting in methionine formation. The chain is 5-methyltetrahydropteroyltriglutamate--homocysteine methyltransferase from Salmonella newport (strain SL254).